Here is a 381-residue protein sequence, read N- to C-terminus: Orotidine 5'-phosphate decarboxylase (381 aa).

Residues aspartate 42, 64-66 (KTH), 99-108 (DRKFGDIGHT), tyrosine 333, and arginine 352 contribute to the substrate site. The active-site Proton donor is lysine 101. The disordered stretch occupies residues 311-333 (LPPEDEDQQTNGSVGGDGQGQQY).

It belongs to the OMP decarboxylase family.

It catalyses the reaction orotidine 5'-phosphate + H(+) = UMP + CO2. Its pathway is pyrimidine metabolism; UMP biosynthesis via de novo pathway; UMP from orotate: step 2/2. In Hypocrea jecorina (Trichoderma reesei), this protein is Orotidine 5'-phosphate decarboxylase (ura3).